We begin with the raw amino-acid sequence, 622 residues long: Chaperone protein HscA homolog (622 aa).

Belongs to the heat shock protein 70 family.

Chaperone involved in the maturation of iron-sulfur cluster-containing proteins. Has a low intrinsic ATPase activity which is markedly stimulated by HscB. The protein is Chaperone protein HscA homolog of Azoarcus sp. (strain BH72).